The chain runs to 231 residues: NADH-ubiquinone oxidoreductase chain 4 (231 aa).

6 helical membrane passes run 1–21, 34–54, 61–80, 85–107, 128–148, and 169–189; these read PIAG…YGII, MFLP…LTCL, SLIA…AIII, GLAG…FCLA, ILPM…AIPP, and TIIL…HMFL.

This sequence belongs to the complex I subunit 4 family.

The protein resides in the mitochondrion membrane. It carries out the reaction a ubiquinone + NADH + 5 H(+)(in) = a ubiquinol + NAD(+) + 4 H(+)(out). Core subunit of the mitochondrial membrane respiratory chain NADH dehydrogenase (Complex I) that is believed to belong to the minimal assembly required for catalysis. Complex I functions in the transfer of electrons from NADH to the respiratory chain. The immediate electron acceptor for the enzyme is believed to be ubiquinone. This is NADH-ubiquinone oxidoreductase chain 4 (MT-ND4) from Gloydius blomhoffii (Mamushi).